Consider the following 452-residue polypeptide: Adenylosuccinate synthetase 2 (452 aa).

GTP-binding positions include 19–25 and 47–49; these read GDEGKAR and GHT. Catalysis depends on aspartate 20, which acts as the Proton acceptor. Positions 20 and 47 each coordinate Mg(2+). IMP is bound by residues 20–23, 45–48, threonine 131, arginine 145, glutamine 223, threonine 238, and arginine 338; these read DEGK and NAGH. The active-site Proton donor is the histidine 48. 334 to 340 is a substrate binding site; it reads TGTGRPR. GTP is bound by residues arginine 340, 366 to 368, and 437 to 439; these read KCD and GLG.

This sequence belongs to the adenylosuccinate synthetase family. As to quaternary structure, homodimer. Mg(2+) is required as a cofactor.

It is found in the cytoplasm. It carries out the reaction IMP + L-aspartate + GTP = N(6)-(1,2-dicarboxyethyl)-AMP + GDP + phosphate + 2 H(+). It functions in the pathway purine metabolism; AMP biosynthesis via de novo pathway; AMP from IMP: step 1/2. Functionally, plays an important role in the de novo pathway of purine nucleotide biosynthesis. Catalyzes the first committed step in the biosynthesis of AMP from IMP. In Cupriavidus pinatubonensis (strain JMP 134 / LMG 1197) (Cupriavidus necator (strain JMP 134)), this protein is Adenylosuccinate synthetase 2.